A 175-amino-acid chain; its full sequence is Arsenite oxidase subunit AioB (175 aa).

A signal peptide (tat-type signal) is located at residues 1–32; the sequence is MSDTINLTRRGFLKVSGSGVAVAATLSPIASA. The 97-residue stretch at 62–158 folds into the Rieske domain; sequence NEPVSFTYPD…LRYDEASDAL (97 aa). The [2Fe-2S] cluster site is built by cysteine 102, histidine 104, cysteine 120, and histidine 123. Cysteine 107 and cysteine 122 are oxidised to a cystine.

This sequence belongs to the AOX family. In terms of assembly, heterodimer consisting of a large and a small subunit. The cofactor is [2Fe-2S] cluster. Predicted to be exported by the Tat system. The position of the signal peptide cleavage has not been experimentally proven.

The enzyme catalyses 2 oxidized [azurin] + arsenite + H2O = 2 reduced [azurin] + arsenate + 3 H(+). Its function is as follows. Involved in the detoxification of arsenic. Oxidizes As(III)O3(3-) (arsenite) to the somewhat less toxic As(V)O4(3-) (arsenate). The sequence is that of Arsenite oxidase subunit AioB (aioB) from Alcaligenes faecalis.